The primary structure comprises 223 residues: Deoxyribose-phosphate aldolase (223 aa).

Asp89 serves as the catalytic Proton donor/acceptor. Catalysis depends on Lys152, which acts as the Schiff-base intermediate with acetaldehyde. The active-site Proton donor/acceptor is Lys181.

This sequence belongs to the DeoC/FbaB aldolase family. DeoC type 1 subfamily.

It localises to the cytoplasm. The catalysed reaction is 2-deoxy-D-ribose 5-phosphate = D-glyceraldehyde 3-phosphate + acetaldehyde. It participates in carbohydrate degradation; 2-deoxy-D-ribose 1-phosphate degradation; D-glyceraldehyde 3-phosphate and acetaldehyde from 2-deoxy-alpha-D-ribose 1-phosphate: step 2/2. Functionally, catalyzes a reversible aldol reaction between acetaldehyde and D-glyceraldehyde 3-phosphate to generate 2-deoxy-D-ribose 5-phosphate. The chain is Deoxyribose-phosphate aldolase from Listeria welshimeri serovar 6b (strain ATCC 35897 / DSM 20650 / CCUG 15529 / CIP 8149 / NCTC 11857 / SLCC 5334 / V8).